A 147-amino-acid chain; its full sequence is PTPN13-like protein, Y-linked (147 aa).

Expressed in testis. Detected in spermatocytes, spermatids and spermatozoa (at protein level).

The sequence is that of PTPN13-like protein, Y-linked (PRY) from Homo sapiens (Human).